Here is a 38-residue protein sequence, read N- to C-terminus: Defensin-1 (38 aa).

Intrachain disulfides connect cysteine 4-cysteine 25, cysteine 11-cysteine 33, and cysteine 15-cysteine 35.

The protein localises to the secreted. Its function is as follows. Has antibacterial activity against the Gram-positive bacteria L.lactis and S.aureus, and against the Gram-negative bacteria E.coli D32 and V.parahemolyticus. This is Defensin-1 from Crassostrea virginica (Eastern oyster).